A 452-amino-acid polypeptide reads, in one-letter code: Exodeoxyribonuclease 7 large subunit (452 aa).

Belongs to the XseA family. In terms of assembly, heterooligomer composed of large and small subunits.

The protein localises to the cytoplasm. It catalyses the reaction Exonucleolytic cleavage in either 5'- to 3'- or 3'- to 5'-direction to yield nucleoside 5'-phosphates.. In terms of biological role, bidirectionally degrades single-stranded DNA into large acid-insoluble oligonucleotides, which are then degraded further into small acid-soluble oligonucleotides. The sequence is that of Exodeoxyribonuclease 7 large subunit from Bacillus thuringiensis (strain Al Hakam).